Reading from the N-terminus, the 660-residue chain is Acetyl-coenzyme A synthetase (660 aa).

Residues 197 to 200 (RGGK) and Thr-317 contribute to the CoA site. Residues 397–399 (GEP), 421–426 (DTFWQT), Asp-512, and Arg-528 contribute to the ATP site. Residue Ser-536 participates in CoA binding. Arg-539 contacts ATP. Mg(2+) contacts are provided by Val-550 and Val-555. The residue at position 625 (Lys-625) is an N6-acetyllysine.

The protein belongs to the ATP-dependent AMP-binding enzyme family. The cofactor is Mg(2+). Acetylated. Deacetylation by the SIR2-homolog deacetylase activates the enzyme.

It carries out the reaction acetate + ATP + CoA = acetyl-CoA + AMP + diphosphate. Its function is as follows. Catalyzes the conversion of acetate into acetyl-CoA (AcCoA), an essential intermediate at the junction of anabolic and catabolic pathways. AcsA undergoes a two-step reaction. In the first half reaction, AcsA combines acetate with ATP to form acetyl-adenylate (AcAMP) intermediate. In the second half reaction, it can then transfer the acetyl group from AcAMP to the sulfhydryl group of CoA, forming the product AcCoA. This Herminiimonas arsenicoxydans protein is Acetyl-coenzyme A synthetase.